The chain runs to 298 residues: MTDAPVISPLDQARILSEALPHMQRYDEETIVIKYGGHAMGAEDTAKAFARDIVLLEQTAVNPVVVHGGGPQIAQMLKRLGIKSEFAAGLRITDAATIEIVEMVLAGSINKQLVGYINEAGGKAVGLCGKDGNMVSASKATRTMVDPDSRIEEVIDLGFVGEPEKVDLTLLNQLIGHELIPVLAPLATSASGQTFNVNADTFAGAVAGALRAKRLLLLTDVPGVLDQNKKLIPELSIKDARKLIADGTISGGMIPKVETCIYALEQGVEGVVILDGKVPHAVLLELFTNQGTGTLIHK.

Residues 69 to 70, arginine 91, and asparagine 196 contribute to the substrate site; that span reads GG.

This sequence belongs to the acetylglutamate kinase family. ArgB subfamily.

Its subcellular location is the cytoplasm. It carries out the reaction N-acetyl-L-glutamate + ATP = N-acetyl-L-glutamyl 5-phosphate + ADP. It participates in amino-acid biosynthesis; L-arginine biosynthesis; N(2)-acetyl-L-ornithine from L-glutamate: step 2/4. In terms of biological role, catalyzes the ATP-dependent phosphorylation of N-acetyl-L-glutamate. This chain is Acetylglutamate kinase, found in Rhodopseudomonas palustris (strain ATCC BAA-98 / CGA009).